The sequence spans 437 residues: Sodium/bile acid cotransporter 4 (437 aa).

Residues methionine 1–histidine 103 are Extracellular-facing. N-linked (GlcNAc...) asparagine glycans are attached at residues asparagine 6, asparagine 20, and asparagine 26. The interval leucine 16–threonine 84 is disordered. Positions leucine 21–leucine 50 are enriched in low complexity. A helical transmembrane segment spans residues glycine 104–valine 124. Residues aspartate 125–leucine 140 lie on the Cytoplasmic side of the membrane. The helical transmembrane segment at leucine 141–phenylalanine 161 threads the bilayer. At lysine 162 to serine 197 the chain is on the extracellular side. Asparagine 181 and asparagine 195 each carry an N-linked (GlcNAc...) asparagine glycan. A helical membrane pass occupies residues isoleucine 198–isoleucine 218. Over tyrosine 219–proline 233 the chain is Cytoplasmic. Residues leucine 234–isoleucine 254 form a helical membrane-spanning segment. The Extracellular portion of the chain corresponds to arginine 255 to lysine 267. A helical membrane pass occupies residues valine 268 to leucine 288. Over glycine 289 to glutamate 291 the chain is Cytoplasmic. The chain crosses the membrane as a helical span at residues leucine 292–tyrosine 312. The Extracellular portion of the chain corresponds to alanine 313–methionine 360. Residues tyrosine 361–isoleucine 381 form a helical membrane-spanning segment. At tyrosine 382–leucine 437 the chain is on the cytoplasmic side.

It belongs to the bile acid:sodium symporter (BASS) (TC 2.A.28) family. Post-translationally, activated following N-terminal proteolytic cleavage by thrombin and/or proteases. In terms of tissue distribution, mainly expressed in the central nervous system cholinergic neurons. Expressed (at protein level) in motor regions of the spinal cord and rhombencephalon, in mesopontine cholinergic neurons, the medial habenula, cholinergic areas of the forebrain, and the gut myenteric plexus.

The protein localises to the cell membrane. Functionally, transporter for bile acids. The sequence is that of Sodium/bile acid cotransporter 4 (Slc10a4) from Rattus norvegicus (Rat).